A 384-amino-acid chain; its full sequence is NADP-dependent alcohol dehydrogenase 3 (384 aa).

The protein belongs to the iron-containing alcohol dehydrogenase family.

The catalysed reaction is a primary alcohol + NADP(+) = an aldehyde + NADPH + H(+). In terms of biological role, has NADP-dependent alcohol dehydrogenase activity. The chain is NADP-dependent alcohol dehydrogenase 3 from Entamoeba histolytica (strain ATCC 30459 / HM-1:IMSS / ABRM).